Reading from the N-terminus, the 1368-residue chain is DNA-directed RNA polymerase subunit beta (1368 aa).

Belongs to the RNA polymerase beta chain family. As to quaternary structure, the RNAP catalytic core consists of 2 alpha, 1 beta, 1 beta' and 1 omega subunit. When a sigma factor is associated with the core the holoenzyme is formed, which can initiate transcription.

The catalysed reaction is RNA(n) + a ribonucleoside 5'-triphosphate = RNA(n+1) + diphosphate. Its function is as follows. DNA-dependent RNA polymerase catalyzes the transcription of DNA into RNA using the four ribonucleoside triphosphates as substrates. In Legionella pneumophila (strain Corby), this protein is DNA-directed RNA polymerase subunit beta.